Consider the following 271-residue polypeptide: Formamidopyrimidine-DNA glycosylase (271 aa).

The Schiff-base intermediate with DNA role is filled by Pro-2. Glu-3 (proton donor) is an active-site residue. Residue Lys-58 is the Proton donor; for beta-elimination activity of the active site. DNA-binding residues include His-91, Arg-110, and Arg-152. The FPG-type zinc-finger motif lies at 237-271; the sequence is RAYGRGGQPCTVCQTELKEIKLGQRTSVFCPSCQR. Residue Arg-261 is the Proton donor; for delta-elimination activity of the active site.

The protein belongs to the FPG family. Monomer. Zn(2+) serves as cofactor.

It catalyses the reaction Hydrolysis of DNA containing ring-opened 7-methylguanine residues, releasing 2,6-diamino-4-hydroxy-5-(N-methyl)formamidopyrimidine.. It carries out the reaction 2'-deoxyribonucleotide-(2'-deoxyribose 5'-phosphate)-2'-deoxyribonucleotide-DNA = a 3'-end 2'-deoxyribonucleotide-(2,3-dehydro-2,3-deoxyribose 5'-phosphate)-DNA + a 5'-end 5'-phospho-2'-deoxyribonucleoside-DNA + H(+). Functionally, involved in base excision repair of DNA damaged by oxidation or by mutagenic agents. Acts as a DNA glycosylase that recognizes and removes damaged bases. Has a preference for oxidized purines, such as 7,8-dihydro-8-oxoguanine (8-oxoG). Has AP (apurinic/apyrimidinic) lyase activity and introduces nicks in the DNA strand. Cleaves the DNA backbone by beta-delta elimination to generate a single-strand break at the site of the removed base with both 3'- and 5'-phosphates. This chain is Formamidopyrimidine-DNA glycosylase, found in Hahella chejuensis (strain KCTC 2396).